We begin with the raw amino-acid sequence, 543 residues long: CTP synthase (543 aa).

An amidoligase domain region spans residues 1-265 (MARYIFITGG…DDEVLAAFGI (265 aa)). Serine 13 provides a ligand contact to CTP. Serine 13 serves as a coordination point for UTP. ATP is bound at residue 14 to 19 (SLGKGL). Tyrosine 54 contacts L-glutamine. Residue aspartate 71 coordinates ATP. Mg(2+)-binding residues include aspartate 71 and glutamate 139. CTP is bound by residues 146–148 (DIE), 186–191 (KTKPTQ), and lysine 222. Residues 186–191 (KTKPTQ) and lysine 222 contribute to the UTP site. 238–240 (RDV) is a binding site for ATP. The 252-residue stretch at 291–542 (TIAIVGKYTG…VQAAVVQSRL (252 aa)) folds into the Glutamine amidotransferase type-1 domain. Glycine 353 contributes to the L-glutamine binding site. The Nucleophile; for glutamine hydrolysis role is filled by cysteine 380. L-glutamine contacts are provided by residues 381–384 (FGMQ), glutamate 404, and arginine 470. Catalysis depends on residues histidine 515 and glutamate 517.

This sequence belongs to the CTP synthase family. In terms of assembly, homotetramer.

It catalyses the reaction UTP + L-glutamine + ATP + H2O = CTP + L-glutamate + ADP + phosphate + 2 H(+). The enzyme catalyses L-glutamine + H2O = L-glutamate + NH4(+). The catalysed reaction is UTP + NH4(+) + ATP = CTP + ADP + phosphate + 2 H(+). It participates in pyrimidine metabolism; CTP biosynthesis via de novo pathway; CTP from UDP: step 2/2. Allosterically activated by GTP, when glutamine is the substrate; GTP has no effect on the reaction when ammonia is the substrate. The allosteric effector GTP functions by stabilizing the protein conformation that binds the tetrahedral intermediate(s) formed during glutamine hydrolysis. Inhibited by the product CTP, via allosteric rather than competitive inhibition. In terms of biological role, catalyzes the ATP-dependent amination of UTP to CTP with either L-glutamine or ammonia as the source of nitrogen. Regulates intracellular CTP levels through interactions with the four ribonucleotide triphosphates. This chain is CTP synthase, found in Rhodopseudomonas palustris (strain BisB18).